A 984-amino-acid polypeptide reads, in one-letter code: Hyaluronate lyase (984 aa).

Polar residues-rich tracts occupy residues 1 to 12 (MKQVVDNQTQNK), 19 to 32 (DFNQTNPVSGSWSH), and 54 to 66 (IQRTEQGQVSLSS). Disordered stretches follow at residues 1-32 (MKQVVDNQTQNKELVKNGDFNQTNPVSGSWSH) and 49-68 (DKSPIIQRTEQGQVSLSSDK). The N-terminal stretch at 1 to 40 (MKQVVDNQTQNKELVKNGDFNQTNPVSGSWSHTSAREWSA) is a signal peptide. Active-site residues include asparagine 429, histidine 479, and tyrosine 488. The span at 701 to 726 (TEKDAKREDTTKEFMSKHSKDAKEKT) shows a compositional bias: basic and acidic residues. The interval 701–728 (TEKDAKREDTTKEFMSKHSKDAKEKTGQ) is disordered.

Belongs to the polysaccharide lyase 8 family.

It is found in the secreted. The catalysed reaction is [hyaluronan](n) = n 3-(4-deoxy-beta-D-gluc-4-enuronosyl)-N-acetyl-D-glucosamine + H2O. The protein is Hyaluronate lyase of Streptococcus agalactiae serotype III (strain NEM316).